The primary structure comprises 566 residues: Nitrate/nitrite sensor protein NarQ (566 aa).

Residues 1–13 (MIVKRPVSASLAR) are Cytoplasmic-facing. A helical membrane pass occupies residues 14 to 34 (AFFYIVLLSILSTGIALLTLA). The Periplasmic portion of the chain corresponds to 35-146 (SSLRDAEAIN…LALQHYAERK (112 aa)). A helical membrane pass occupies residues 147 to 167 (MLLVVAISLAGGIGIFTLVFF). The Cytoplasmic segment spans residues 168–566 (TLRRIRHQVV…SAEGEESQLM (399 aa)). Positions 174-227 (HQVVAPLNQLVTASQRIEHGQFDSPPLDTNLPNELGLLAKTFNQMSSELHKLYR) constitute an HAMP domain. Residues 364-559 (TIARELHDSL…LVSISFRSAE (196 aa)) form the Histidine kinase domain. Histidine 370 bears the Phosphohistidine; by autocatalysis mark.

The protein localises to the cell inner membrane. It carries out the reaction ATP + protein L-histidine = ADP + protein N-phospho-L-histidine.. Its function is as follows. Acts as a sensor for nitrate/nitrite and transduces signal of nitrate/nitrite availability to the NarL/NarP proteins. NarQ probably activates NarL and NarP by phosphorylation. NarQ probably negatively regulates the NarL protein by dephosphorylation. This is Nitrate/nitrite sensor protein NarQ (narQ) from Escherichia coli (strain K12).